Consider the following 240-residue polypeptide: Fatty acid metabolism regulator protein (240 aa).

In terms of domain architecture, HTH gntR-type spans lysine 6–phenylalanine 74. The segment at residues glutamate 34 to glutamine 53 is a DNA-binding region (H-T-H motif).

As to quaternary structure, homodimer.

Its subcellular location is the cytoplasm. Multifunctional regulator of fatty acid metabolism. This is Fatty acid metabolism regulator protein from Shewanella oneidensis (strain ATCC 700550 / JCM 31522 / CIP 106686 / LMG 19005 / NCIMB 14063 / MR-1).